Here is a 643-residue protein sequence, read N- to C-terminus: MMIWVPALIFLSACLLPRSNGTPLEWDFAVTLRTKIQFLDSSWQTIATAAHEFDELSALTFDESEELIYFNDRQHQNGSIFSLRRDAYAASHVAQQAIQRTGNESVGGLAYDPLNRNLFWSDTLQRKIFFASIDSPPSQPPKVLVDLSQEGARPEGVAVDICRRKLYWTNSNITHPTVERIDVDGSNRVIIADSDIDMPKGIVVDQLSDRLFWIDDLKGVFFAVMSSNLDGSDRQVVLKDKHHEPQNLALTNDAIFWTDRTTKAVWSHPKRAAVKATTTVRPEVESSTDGTESESKQESEPVEDCPLVRVANLSEEARGIVARTGFYQRLQKDAHCSSIVRKIKLRLDEMSEKKEVRSLVDERMDQLERDHCMNGGSYISKRDLCICPAGFKGSRCEIRECHNYCVHGTCQMSDLAYPKCYCQPGFTGERCEVSNCAGLCLNGGHCRLGETEKDQPSCECPANFAGERCEQNSTQICSLFCRLLKHEPEIHVPFGCHDICEELALDNSTNIAIPQYQHLEVCQTPFVWTSSVIIILVVGIVFSLLLITTIIHGIRRLYKPKRPRIRKTFVVRKQPRTNSAGDTPLTNRPMTAEQCEITIENCCNMNICETPCFDPKLVEQTLAKSSCKEDKKILIHNMEDDLY.

The signal sequence occupies residues 1–21; it reads MMIWVPALIFLSACLLPRSNG. Residues 22-530 are Extracellular-facing; the sequence is TPLEWDFAVT…VCQTPFVWTS (509 aa). 2 N-linked (GlcNAc...) asparagine glycosylation sites follow: Asn77 and Asn103. LDL-receptor class B repeat units follow at residues 116-163, 164-208, and 209-254; these read RNLF…DICR, RKLY…DQLS, and DRLF…TNDA. N-linked (GlcNAc...) asparagine glycosylation occurs at Asn172. Polar residues predominate over residues 276–290; the sequence is ATTTVRPEVESSTDG. A disordered region spans residues 276–303; the sequence is ATTTVRPEVESSTDGTESESKQESEPVE. N-linked (GlcNAc...) asparagine glycosylation is present at Asn312. EGF-like domains lie at 363 to 397, 398 to 429, and 432 to 470; these read RMDQ…SRCE, IREC…FTGE, and EVSN…ERCE. 7 disulfide bridges follow: Cys372-Cys385, Cys387-Cys396, Cys401-Cys410, Cys405-Cys420, Cys436-Cys446, Cys440-Cys458, and Cys460-Cys469. N-linked (GlcNAc...) asparagine glycans are attached at residues Asn472 and Asn507. A helical transmembrane segment spans residues 531-551; it reads SVIIILVVGIVFSLLLITTII. Residues 552-643 are Cytoplasmic-facing; sequence HGIRRLYKPK…LIHNMEDDLY (92 aa).

This sequence belongs to the cueball family.

It is found in the cell membrane. Has a role in spermatogenesis and oogenesis. The sequence is that of Protein cueball from Drosophila ananassae (Fruit fly).